Here is a 387-residue protein sequence, read N- to C-terminus: GTPase Obg (387 aa).

Residues 1–159 enclose the Obg domain; sequence MKFVDEVEIR…RSLKLELLLL (159 aa). One can recognise an OBG-type G domain in the interval 160-333; sequence ADVGLLGLPN…LTQKVMTFIE (174 aa). GTP is bound by residues 166 to 173, 191 to 195, 213 to 216, 283 to 286, and 314 to 316; these read GLPNAGKS, FTTLV, DIPG, NKLD, and SAF. Residues Ser-173 and Thr-193 each contribute to the Mg(2+) site. Residues 361-387 are disordered; it reads AAHSQDDDLDDDDWDEDDYDVEVEYRQ. The span at 367-387 shows a compositional bias: acidic residues; it reads DDLDDDDWDEDDYDVEVEYRQ.

This sequence belongs to the TRAFAC class OBG-HflX-like GTPase superfamily. OBG GTPase family. Monomer. The cofactor is Mg(2+).

The protein localises to the cytoplasm. An essential GTPase which binds GTP, GDP and possibly (p)ppGpp with moderate affinity, with high nucleotide exchange rates and a fairly low GTP hydrolysis rate. Plays a role in control of the cell cycle, stress response, ribosome biogenesis and in those bacteria that undergo differentiation, in morphogenesis control. The chain is GTPase Obg from Colwellia psychrerythraea (strain 34H / ATCC BAA-681) (Vibrio psychroerythus).